Here is a 183-residue protein sequence, read N- to C-terminus: Thymidine kinase (183 aa).

Residue 11 to 18 (GPMFSGKT) coordinates ATP. E89 functions as the Proton acceptor in the catalytic mechanism. F119 serves as a coordination point for substrate. Residues C144 and C147 each coordinate Zn(2+). Residue 163–167 (VMDIG) coordinates substrate. Residues C176 and C179 each coordinate Zn(2+).

Belongs to the thymidine kinase family.

The catalysed reaction is thymidine + ATP = dTMP + ADP + H(+). The sequence is that of Thymidine kinase (TK) from Vertebrata (FPV).